Reading from the N-terminus, the 549-residue chain is Chaperonin GroEL (549 aa).

ATP contacts are provided by residues 30 to 33 (TLGP), Lys-51, 87 to 91 (DGTTT), Gly-415, 479 to 481 (NAA), and Asp-495.

The protein belongs to the chaperonin (HSP60) family. Forms a cylinder of 14 subunits composed of two heptameric rings stacked back-to-back. Interacts with the co-chaperonin GroES.

The protein resides in the cytoplasm. The catalysed reaction is ATP + H2O + a folded polypeptide = ADP + phosphate + an unfolded polypeptide.. Functionally, together with its co-chaperonin GroES, plays an essential role in assisting protein folding. The GroEL-GroES system forms a nano-cage that allows encapsulation of the non-native substrate proteins and provides a physical environment optimized to promote and accelerate protein folding. In Stenotrophomonas maltophilia (strain R551-3), this protein is Chaperonin GroEL.